The chain runs to 341 residues: Anthranilate phosphoribosyltransferase (341 aa).

Residues G82, 85–86, T90, 92–95, 110–118, and S122 each bind 5-phospho-alpha-D-ribose 1-diphosphate; these read GD, NIST, and KHGGRSVSG. An anthranilate-binding site is contributed by G82. S94 is a Mg(2+) binding site. R168 provides a ligand contact to anthranilate. Mg(2+)-binding residues include D227 and E228.

Belongs to the anthranilate phosphoribosyltransferase family. Homodimer. Mg(2+) is required as a cofactor.

It carries out the reaction N-(5-phospho-beta-D-ribosyl)anthranilate + diphosphate = 5-phospho-alpha-D-ribose 1-diphosphate + anthranilate. Its pathway is amino-acid biosynthesis; L-tryptophan biosynthesis; L-tryptophan from chorismate: step 2/5. Catalyzes the transfer of the phosphoribosyl group of 5-phosphorylribose-1-pyrophosphate (PRPP) to anthranilate to yield N-(5'-phosphoribosyl)-anthranilate (PRA). The protein is Anthranilate phosphoribosyltransferase of Nitrosomonas europaea (strain ATCC 19718 / CIP 103999 / KCTC 2705 / NBRC 14298).